A 193-amino-acid polypeptide reads, in one-letter code: Adenine phosphoribosyltransferase (193 aa).

The protein belongs to the purine/pyrimidine phosphoribosyltransferase family. Homodimer.

It localises to the cytoplasm. The enzyme catalyses AMP + diphosphate = 5-phospho-alpha-D-ribose 1-diphosphate + adenine. It functions in the pathway purine metabolism; AMP biosynthesis via salvage pathway; AMP from adenine: step 1/1. Catalyzes a salvage reaction resulting in the formation of AMP, that is energically less costly than de novo synthesis. The sequence is that of Adenine phosphoribosyltransferase from Bifidobacterium longum (strain DJO10A).